A 603-amino-acid polypeptide reads, in one-letter code: Probable HECT-type ubiquitin ligase-interacting protein creD (603 aa).

2 disordered regions span residues 375 to 398 and 432 to 499; these read ELDP…GTLS and LNIT…MATP. The span at 443–455 shows a compositional bias: basic and acidic residues; sequence TDHESQNDSEHRR. A compositionally biased stretch (low complexity) spans 465 to 481; it reads PSSGSNSHSPSSPVLSR. Basic and acidic residues predominate over residues 482–492; it reads RPSDEVDHEHV.

This sequence belongs to the arrestin family. As to quaternary structure, interacts with hulA.

In terms of biological role, component of the regulatory network controlling carbon source utilization through ubiquitination and deubiquitination involving creA, creB, creC, creD and acrB. May be involved in signaling by recognizing appropriately phosphorylated substrates via its arrestin domains and then recruit a HECT-type ubiquitin ligase such as hulA, leading to ubiquitination of the substrate, providing a link between ubiquitination and phosphorylation in protein regulation and stability. In Aspergillus flavus (strain ATCC 200026 / FGSC A1120 / IAM 13836 / NRRL 3357 / JCM 12722 / SRRC 167), this protein is Probable HECT-type ubiquitin ligase-interacting protein creD (creD).